Reading from the N-terminus, the 433-residue chain is Serine hydroxymethyltransferase (433 aa).

121–123 contributes to the (6S)-5,6,7,8-tetrahydrofolate binding site; that stretch reads AHV. Lys-227 is modified (N6-(pyridoxal phosphate)lysine). Position 243 (Glu-243) interacts with (6S)-5,6,7,8-tetrahydrofolate.

The protein belongs to the SHMT family. In terms of assembly, homodimer. Requires pyridoxal 5'-phosphate as cofactor.

The protein resides in the cytoplasm. It participates in amino-acid biosynthesis; glycine biosynthesis; glycine from L-serine: step 1/1. In terms of biological role, catalyzes the reversible interconversion of serine and glycine with a modified folate serving as the one-carbon carrier. Also exhibits a pteridine-independent aldolase activity toward beta-hydroxyamino acids, producing glycine and aldehydes, via a retro-aldol mechanism. The chain is Serine hydroxymethyltransferase from Saccharolobus islandicus (strain L.S.2.15 / Lassen #1) (Sulfolobus islandicus).